The sequence spans 358 residues: Phospho-N-acetylmuramoyl-pentapeptide-transferase (358 aa).

Transmembrane regions (helical) follow at residues 27 to 47 (LFNNFIFIGVFILFFFLSLFA), 81 to 101 (MGGVFLMIPFFILLLIITINL), 106 to 126 (LFLLLLTIFGFYITGFLDDYL), 147 to 167 (VISIIFILLAYEKNLINPLVI), 171 to 191 (SWVINMNIFILPISFLVLVGI), 201 to 221 (LDGLAAGCSGIVFYGLGTEIL), 228 to 248 (LFVFSILCFSMSGLCLGFLKY), 255 to 275 (IFMGDTGSLSIGATLGTIALL), 278 to 298 (SVFTLSIFSGIFIIESLSVII), and 336 to 356 (IVENFWKINILLIILGIVLKI).

Belongs to the glycosyltransferase 4 family. MraY subfamily. Mg(2+) serves as cofactor.

The protein localises to the cell inner membrane. The catalysed reaction is UDP-N-acetyl-alpha-D-muramoyl-L-alanyl-gamma-D-glutamyl-meso-2,6-diaminopimeloyl-D-alanyl-D-alanine + di-trans,octa-cis-undecaprenyl phosphate = di-trans,octa-cis-undecaprenyl diphospho-N-acetyl-alpha-D-muramoyl-L-alanyl-D-glutamyl-meso-2,6-diaminopimeloyl-D-alanyl-D-alanine + UMP. Its pathway is cell wall biogenesis; peptidoglycan biosynthesis. In terms of biological role, catalyzes the initial step of the lipid cycle reactions in the biosynthesis of the cell wall peptidoglycan: transfers peptidoglycan precursor phospho-MurNAc-pentapeptide from UDP-MurNAc-pentapeptide onto the lipid carrier undecaprenyl phosphate, yielding undecaprenyl-pyrophosphoryl-MurNAc-pentapeptide, known as lipid I. This Prochlorococcus marinus (strain MIT 9215) protein is Phospho-N-acetylmuramoyl-pentapeptide-transferase.